The following is a 1086-amino-acid chain: MVLGSSQSSAKELTTQSSIFRFLVLLLCFTSATGGQINGKLLNGNGVFVSRDELQNKNVLGVITGFDLLVVATHSRFQVFENNEERRTVGHVSLDMHPRTKFLELKLFSKSEIFYCDESSCGLCTYSGVTSSCSTFMLNGDEPKIQEILSSSAVKIENLGQIMLAISFKNEEDPDNPRTMILRYNAQDTGTVIPTAYHADSSFIHNNHALTGFEREGFVYFVMTASQIFEPEVFLHDQSNNKVTVTKVIRFCATDQTADLASKISILVGCDQEFRNISSRGETAVYDHANDLINIVMFNHTSMNHLMCRFKMANIEKRFKTIWSTCQETSFSGSTAKTTRCKYPQIFDQMKVKKGCLTYSRLDDESSPTLCVRYGRGDALDNCQLHTAKSNSYRYGWLEDYNVLQGELMMRIPYPFFGIAESLITDGKSYFAAVSGEFDMSDVLRFSASESADIRPHWRTNISVVGKFSITKTKENQLLYTTVEGLQSLDISCKGLYPNCQTLRQGGWEDPLECSWCADDNAQRTITSSEVSSCKNNLKHECPPSMRWIHKYNNNSGFTAVVDGFRALKNPKLNACGTNCVVTVVDSSSIQCDTNPDEVIGDSCKQVFLSGMIGDKNYSFPFDYQQADRGTQTDVKNSQVDDKKGSSPGWKIAIAIISVMTIILIVAIIVYYMRNRFPRIKTHVRPPIGQRIENEYDMGHMAGRQAQLAINGDNYVKVFRSMRPDLKVDFKNLRVDKLDPIGQGHYGVVYKAMYSPSKSLEEKVVCKYLKEGKISEFYEEARTMSEFDHPNILKLIGVALDDSSHLPIIITEYMAKGDLKSFIENVENTIKMRDLFEFAFDIAKGMNYMHSKKFIHRDLACRNCLLDEHLRVKIADFGLCRKVDIETELYVQMHERDLPVRWFPPEISEQGFGITSDIWSFGVVIWELFTRGSTPYSNMASWILILPWLKESETNRLRKPPYCPEKLYTDVMLACWKANPAERPQFSDLVTIIPNVVKYMEGYDRSQLQAGYERVSSRFLSLSRHDPAFPIYQNEMPNTPLLANCQNDTNDSKTLAELPSDSPSTSTAIPQSTPYQLLSECSETSV.

An N-terminal signal peptide occupies residues 1-34 (MVLGSSQSSAKELTTQSSIFRFLVLLLCFTSATG). Over 35–651 (GQINGKLLNG…DKKGSSPGWK (617 aa)) the chain is Extracellular. Residues N276, N299, N461, N554, and N617 are each glycosylated (N-linked (GlcNAc...) asparagine). The helical transmembrane segment at 652–672 (IAIAIISVMTIILIVAIIVYY) threads the bilayer. The Cytoplasmic segment spans residues 673 to 1086 (MRNRFPRIKT…LLSECSETSV (414 aa)). The Protein kinase domain occupies 735–996 (VDKLDPIGQG…SDLVTIIPNV (262 aa)). ATP is bound by residues 741 to 749 (IGQGHYGVV) and K767. D858 acts as the Proton acceptor in catalysis. A Phosphotyrosine modification is found at Y890. The interval 1056 to 1086 (AELPSDSPSTSTAIPQSTPYQLLSECSETSV) is disordered. The span at 1061 to 1086 (DSPSTSTAIPQSTPYQLLSECSETSV) shows a compositional bias: polar residues.

This sequence belongs to the protein kinase superfamily. Tyr protein kinase family. Interacts (via cytoplasmic domain) with mlk-1. Interacts with shc-1 (via SH2 domain). May interact (when tyrosine-phosphorylated) with tns-1 (via SH2 domain). In terms of processing, may be autophosphorylated on Tyr-890 following dimerization. As to expression, expressed in body wall and vulva muscles, pharynx, intestine, excretory canals, distal tip cells and some neurons. Expressed in D-type motor neurons upon axon injury.

Its subcellular location is the cell membrane. The catalysed reaction is L-tyrosyl-[protein] + ATP = O-phospho-L-tyrosyl-[protein] + ADP + H(+). Functionally, receptor tyrosine kinase which may phosphorylate mlk-1, a component of the mlk-1, mek-1 and kgb-1 pathway. Involved in axon regeneration after injury by promoting the generation of productive and stable growth cones. In Caenorhabditis elegans, this protein is Tyrosine-protein kinase receptor svh-2.